The primary structure comprises 1037 residues: Serine/threonine-protein kinase ULK2 (1037 aa).

A Protein kinase domain is found at 9-271 (YCKRDLVGHG…FEAFFSHPFL (263 aa)). ATP contacts are provided by residues 15 to 23 (VGHGAFAVV) and Lys-39. The Proton acceptor role is filled by Asp-131. A disordered region spans residues 319–350 (ENLSSPPLGPPNYLQVSKDSASNSSKNSSCDT). Low complexity predominate over residues 335-348 (SKDSASNSSKNSSC). At Ser-430 the chain carries Phosphoserine. 4 disordered regions span residues 452–480 (CSPV…PSPL), 494–515 (GHPQ…PQTQ), 540–594 (QKLR…KTPL), and 626–697 (HGPA…NTER). Polar residues-rich tracts occupy residues 506–515 (SSGSPVPQTQ) and 571–585 (LGTS…SPRN). A compositionally biased stretch (basic and acidic residues) spans 632-643 (QSKDGNDPRECS). Over residues 658-678 (QQQSKAVFGRSVSTGKLSEQQ) the composition is skewed to polar residues. Phosphoserine is present on residues Ser-772 and Ser-781. A CTD-like region region spans residues 813–1037 (ELPEETLMER…SALCCSTATV (225 aa)).

The protein belongs to the protein kinase superfamily. Ser/Thr protein kinase family. APG1/unc-51/ULK1 subfamily. Component of a complex consisting of ATG13/KIAA0652, ULK1 and RB1CC1/FIP200. Interacts (via C-terminus) with ATG13/KIAA0652. Associates with the mammalian target of rapamycin complex 1 (mTORC1) through an interaction with RPTOR. Interacts with SYNGAP1. In terms of processing, autophosphorylated. In response to nutrient limitation, probably phosphorylated and activated by AMPK, leading to activate autophagy. As to expression, widely expressed.

The protein resides in the cytoplasmic vesicle membrane. It carries out the reaction L-seryl-[protein] + ATP = O-phospho-L-seryl-[protein] + ADP + H(+). The catalysed reaction is L-threonyl-[protein] + ATP = O-phospho-L-threonyl-[protein] + ADP + H(+). Functionally, serine/threonine-protein kinase involved in autophagy in response to starvation. Acts upstream of phosphatidylinositol 3-kinase PIK3C3 to regulate the formation of autophagophores, the precursors of autophagosomes. Part of regulatory feedback loops in autophagy: acts both as a downstream effector and a negative regulator of mammalian target of rapamycin complex 1 (mTORC1) via interaction with RPTOR. Activated via phosphorylation by AMPK, also acts as a negative regulator of AMPK through phosphorylation of the AMPK subunits PRKAA1, PRKAB2 and PRKAG1. May phosphorylate ATG13/KIAA0652, FRS2, FRS3 and RPTOR; however such data need additional evidences. Not involved in ammonia-induced autophagy or in autophagic response of cerebellar granule neurons (CGN) to low potassium concentration. Plays a role early in neuronal differentiation and is required for granule cell axon formation: may govern axon formation via Ras-like GTPase signaling and through regulation of the Rab5-mediated endocytic pathways within developing axons. In Mus musculus (Mouse), this protein is Serine/threonine-protein kinase ULK2 (Ulk2).